Reading from the N-terminus, the 395-residue chain is Beta-1,4-galactosyltransferase 3 (395 aa).

The Cytoplasmic segment spans residues 1-10; the sequence is MLRRLLERPC. A helical; Signal-anchor for type II membrane protein membrane pass occupies residues 11–31; it reads TLALLVGSQLAVMMYLSLGGF. At 32-395 the chain is on the lumenal side; the sequence is RSLSALFGRD…ANHTAPRGSH (364 aa). Asn57 carries an N-linked (GlcNAc...) asparagine glycan. Cysteines 79 and 121 form a disulfide. 132-136 is a UDP-alpha-D-galactose binding site; sequence PHRAR. Residue Asn168 is glycosylated (N-linked (GlcNAc...) asparagine). Residues 171–173, 198–199, Tyr228, and Trp260 each bind UDP-alpha-D-galactose; these read FNR and VD. Cys192 and Cys211 are joined by a disulfide. Asp199 contributes to the Mn(2+) binding site. Position 262 to 265 (262 to 265) interacts with N-acetyl-D-glucosamine; sequence GEDD. Mn(2+) is bound at residue His293. 293-295 is a binding site for UDP-alpha-D-galactose; that stretch reads HRG. Position 305 (Arg305) interacts with N-acetyl-D-glucosamine. N-linked (GlcNAc...) asparagine glycosylation occurs at Asn339. The disordered stretch occupies residues 340-395; the sequence is ITADIGTDPRGPRSPSGPRYPPGSSQAFRQEMLQRRPPARPGPLPTANHTAPRGSH. The span at 352 to 364 shows a compositional bias: low complexity; that stretch reads RSPSGPRYPPGSS. Residue Asn387 is glycosylated (N-linked (GlcNAc...) asparagine).

It belongs to the glycosyltransferase 7 family. Requires Mn(2+) as cofactor.

It localises to the golgi apparatus. The protein localises to the golgi stack membrane. The catalysed reaction is an N-acetyl-beta-D-glucosaminyl derivative + UDP-alpha-D-galactose = a beta-D-galactosyl-(1-&gt;4)-N-acetyl-beta-D-glucosaminyl derivative + UDP + H(+). It carries out the reaction N-acetyl-D-glucosamine + UDP-alpha-D-galactose = beta-D-galactosyl-(1-&gt;4)-N-acetyl-D-glucosamine + UDP + H(+). The enzyme catalyses a beta-D-GlcNAc-(1-&gt;3)-beta-D-Gal-(1-&gt;4)-beta-D-Glc-(1&lt;-&gt;1)-Cer(d18:1(4E)) + UDP-alpha-D-galactose = a neolactoside nLc4Cer(d18:1(4E)) + UDP + H(+). It catalyses the reaction a beta-D-glucosylceramide + UDP-alpha-D-galactose = a beta-D-galactosyl-(1-&gt;4)-beta-D-glucosyl-(1&lt;-&gt;1)-ceramide + UDP + H(+). The catalysed reaction is a neolactoside IV(3)-beta-GlcNAc-nLc4Cer + UDP-alpha-D-galactose = a neolactoside nLc6Cer + UDP + H(+). It participates in protein modification; protein glycosylation. Functionally, responsible for the synthesis of complex-type N-linked oligosaccharides in many glycoproteins as well as the carbohydrate moieties of glycolipids. The polypeptide is Beta-1,4-galactosyltransferase 3 (Mus musculus (Mouse)).